The chain runs to 118 residues: Cell division protein FtsB (118 aa).

The Cytoplasmic segment spans residues 1 to 3 (MRL). A helical membrane pass occupies residues 4-21 (LFLVLLVLLGLIQYPLWL). Residues 22-118 (GKGGWFKVWD…PRPPATPPRR (97 aa)) lie on the Periplasmic side of the membrane. Positions 28–62 (KVWDLQRQVAEQRETNDGLRARNTALEAEVRDLAT) form a coiled coil. Residues 88–118 (LPPGTPLPSGNSTPQASALSKPRPPATPPRR) are disordered. The span at 95-105 (PSGNSTPQASA) shows a compositional bias: polar residues. The span at 109–118 (PRPPATPPRR) shows a compositional bias: pro residues.

Belongs to the FtsB family. Part of a complex composed of FtsB, FtsL and FtsQ.

The protein localises to the cell inner membrane. Essential cell division protein. May link together the upstream cell division proteins, which are predominantly cytoplasmic, with the downstream cell division proteins, which are predominantly periplasmic. This Bordetella parapertussis (strain 12822 / ATCC BAA-587 / NCTC 13253) protein is Cell division protein FtsB.